Reading from the N-terminus, the 445-residue chain is Selenocysteine lyase (445 aa).

Methionine 1 is subject to N-acetylmethionine. Residues 1–28 are disordered; sequence MEAAVAPGRDAPAPAASQPSGCGKHNSP. A Phosphoserine modification is found at serine 129. Lysine 259 is subject to N6-(pyridoxal phosphate)lysine. Cysteine 388 functions as the S-selanylcysteine intermediate in the catalytic mechanism.

Belongs to the class-V pyridoxal-phosphate-dependent aminotransferase family. Homodimer. The cofactor is pyridoxal 5'-phosphate.

The protein localises to the cytoplasm. The protein resides in the cytosol. It catalyses the reaction L-selenocysteine + AH2 = hydrogenselenide + L-alanine + A + H(+). Its function is as follows. Catalyzes the decomposition of L-selenocysteine to L-alanine and elemental selenium. The sequence is that of Selenocysteine lyase (SCLY) from Homo sapiens (Human).